We begin with the raw amino-acid sequence, 475 residues long: UDP-N-acetylmuramate--L-alanine ligase (475 aa).

Gly125–Thr131 provides a ligand contact to ATP.

The protein belongs to the MurCDEF family.

Its subcellular location is the cytoplasm. The enzyme catalyses UDP-N-acetyl-alpha-D-muramate + L-alanine + ATP = UDP-N-acetyl-alpha-D-muramoyl-L-alanine + ADP + phosphate + H(+). Its pathway is cell wall biogenesis; peptidoglycan biosynthesis. Cell wall formation. This Haemophilus influenzae (strain PittGG) protein is UDP-N-acetylmuramate--L-alanine ligase.